Here is a 428-residue protein sequence, read N- to C-terminus: Divergent protein kinase domain 1A (428 aa).

Residues 1 to 27 (MARSLCPGAWLRKPYYLQARFSYVRMK) lie on the Cytoplasmic side of the membrane. A helical membrane pass occupies residues 28 to 48 (YLFFSWLVVFVGSWIIYVQYS). Residues 49 to 428 (TYTELCRGKD…WKKISYTNDS (380 aa)) are Lumenal-facing.

Belongs to the DIPK family. Among the many cysteines in the lumenal domain, most are probably involved in disulfide bonds.

Its subcellular location is the endoplasmic reticulum membrane. In Homo sapiens (Human), this protein is Divergent protein kinase domain 1A.